A 322-amino-acid polypeptide reads, in one-letter code: Cytochrome c biogenesis protein CcsA (322 aa).

Transmembrane regions (helical) follow at residues 9-29 (ILTHISFSIVSIVITLHLITL), 44-64 (GMIATFLCLTGLLITRWIYSG), 71-91 (LYESFIFLSWSFSLIHIVPYF), 98-118 (LTTITASSTIFTQGFATSGLL), 143-163 (MILSYAALLCGSLLSVALLVI), 226-246 (VISLGFIFLTIGILSGAVWAN), 253-273 (WSWDPKETWAFITWIVFAIYL), and 287-307 (AIVATLGFLIIWICYFGVNLL).

It belongs to the CcmF/CycK/Ccl1/NrfE/CcsA family. May interact with Ccs1.

The protein resides in the plastid. Its subcellular location is the chloroplast thylakoid membrane. Functionally, required during biogenesis of c-type cytochromes (cytochrome c6 and cytochrome f) at the step of heme attachment. The chain is Cytochrome c biogenesis protein CcsA from Guizotia abyssinica (Niger).